A 428-amino-acid polypeptide reads, in one-letter code: Serine hydroxymethyltransferase (428 aa).

Residues Leu-127 and 131-133 (GHL) each bind (6S)-5,6,7,8-tetrahydrofolate. Position 236 is an N6-(pyridoxal phosphate)lysine (Lys-236).

This sequence belongs to the SHMT family. As to quaternary structure, homodimer. Pyridoxal 5'-phosphate is required as a cofactor.

Its subcellular location is the cytoplasm. The catalysed reaction is (6R)-5,10-methylene-5,6,7,8-tetrahydrofolate + glycine + H2O = (6S)-5,6,7,8-tetrahydrofolate + L-serine. It participates in one-carbon metabolism; tetrahydrofolate interconversion. The protein operates within amino-acid biosynthesis; glycine biosynthesis; glycine from L-serine: step 1/1. In terms of biological role, catalyzes the reversible interconversion of serine and glycine with tetrahydrofolate (THF) serving as the one-carbon carrier. This reaction serves as the major source of one-carbon groups required for the biosynthesis of purines, thymidylate, methionine, and other important biomolecules. Also exhibits THF-independent aldolase activity toward beta-hydroxyamino acids, producing glycine and aldehydes, via a retro-aldol mechanism. This Tropheryma whipplei (strain TW08/27) (Whipple's bacillus) protein is Serine hydroxymethyltransferase.